We begin with the raw amino-acid sequence, 292 residues long: NAD kinase (292 aa).

D73 (proton acceptor) is an active-site residue. Residues 73–74, 147–148, H158, R175, D177, 188–193, and Q247 contribute to the NAD(+) site; these read DG, NE, and TAYSLS.

It belongs to the NAD kinase family. It depends on a divalent metal cation as a cofactor.

It is found in the cytoplasm. It catalyses the reaction NAD(+) + ATP = ADP + NADP(+) + H(+). Involved in the regulation of the intracellular balance of NAD and NADP, and is a key enzyme in the biosynthesis of NADP. Catalyzes specifically the phosphorylation on 2'-hydroxyl of the adenosine moiety of NAD to yield NADP. The protein is NAD kinase of Shigella dysenteriae serotype 1 (strain Sd197).